Here is an 872-residue protein sequence, read N- to C-terminus: HTH-type transcriptional regulator AlkS (872 aa).

An HTH luxR-type domain is found at 805-870; sequence LTNTQSTITI…RAVSEARLRG (66 aa). Positions 829-848 form a DNA-binding region, H-T-H motif; it reads NKEIAERLLITEDTVKWHLK.

Its pathway is hydrocarbon metabolism; alkane degradation. Its function is as follows. This protein activates the expression of AlkB1 in the presence of alkanes. The polypeptide is HTH-type transcriptional regulator AlkS (alkS) (Alcanivorax borkumensis (strain ATCC 700651 / DSM 11573 / NCIMB 13689 / SK2)).